The sequence spans 199 residues: RNA-free ribonuclease P (199 aa).

Belongs to the HARP family.

It catalyses the reaction Endonucleolytic cleavage of RNA, removing 5'-extranucleotides from tRNA precursor.. Functionally, RNA-free RNase P that catalyzes the removal of the 5'-leader sequence from pre-tRNA to produce the mature 5'-terminus. This chain is RNA-free ribonuclease P, found in Thermococcus onnurineus (strain NA1).